We begin with the raw amino-acid sequence, 271 residues long: Protein CDV3 homolog (271 aa).

The span at Lys37–Glu47 shows a compositional bias: basic and acidic residues. Disordered regions lie at residues Lys37–Pro151 and Ser186–Ser271. Low complexity predominate over residues Val48–Asn61. Residues Val73 to Glu82 are compositionally biased toward acidic residues. Residues Gln95 to Gln114 are compositionally biased toward polar residues. A Phosphoserine modification is found at Ser134. Positions Arg224 to His242 are enriched in basic and acidic residues.

It belongs to the CDV3 family.

The sequence is that of Protein CDV3 homolog from Drosophila melanogaster (Fruit fly).